Here is a 108-residue protein sequence, read N- to C-terminus: MATLRDKYWFIEWEVVRAHRMEKIPLVVARLILQKEISESCRRHNTSEGIIVSINSVTAESMEHNKVLWFRKLEDRSIVINTTRYHPMRIEYFEAVEVSSLKNGRSSR.

This is an uncharacterized protein from Microplitis demolitor bracovirus (isolate Webb) (MdBV).